We begin with the raw amino-acid sequence, 747 residues long: Polyribonucleotide nucleotidyltransferase (747 aa).

The Mg(2+) site is built by Asp502 and Asp508. The KH domain maps to 569-628; that stretch reads PRMLTITIDPDKIRDIIGPGGKIIKKIIEETGVEIDVEDDGRVFIASTDAAAGERALKII. The S1 motif domain maps to 638-712; it reads GKVYNGKVTR…PQGRLKLSRK (75 aa). Residues 718–747 are disordered; the sequence is STVGEGGHRHFRRAGREGGHRGLNNRRQSR.

Belongs to the polyribonucleotide nucleotidyltransferase family. Mg(2+) serves as cofactor.

It is found in the cytoplasm. It catalyses the reaction RNA(n+1) + phosphate = RNA(n) + a ribonucleoside 5'-diphosphate. Its function is as follows. Involved in mRNA degradation. Catalyzes the phosphorolysis of single-stranded polyribonucleotides processively in the 3'- to 5'-direction. This is Polyribonucleotide nucleotidyltransferase from Moorella thermoacetica (strain ATCC 39073 / JCM 9320).